A 433-amino-acid chain; its full sequence is Probable dipeptidase (433 aa).

Residue Cys20 is part of the active site.

It belongs to the peptidase C69 family.

It carries out the reaction an L-aminoacyl-L-amino acid + H2O = 2 an L-alpha-amino acid. The chain is Probable dipeptidase (pipD) from Salmonella dublin.